The following is a 381-amino-acid chain: Cytochrome b (381 aa).

Helical transmembrane passes span 34 to 54 (FGSL…FLAM), 78 to 99 (WLIR…YLHI), 114 to 134 (WNIG…GYVL), and 179 to 199 (FFAF…IHLL). Residues histidine 84 and histidine 98 each contribute to the heme b site. Residues histidine 183 and histidine 197 each contribute to the heme b site. Histidine 202 lines the a ubiquinone pocket. Transmembrane regions (helical) follow at residues 227 to 247 (YKDL…ALFM), 289 to 309 (LGGV…PLLH), 321 to 341 (LTQI…WIGG), and 348 to 368 (FITV…IIMP).

The protein belongs to the cytochrome b family. As to quaternary structure, the cytochrome bc1 complex contains 3 respiratory subunits (MT-CYB, CYC1 and UQCRFS1), 2 core proteins (UQCRC1 and UQCRC2) and probably 6 low-molecular weight proteins. It depends on heme b as a cofactor.

It is found in the mitochondrion inner membrane. Functionally, component of the ubiquinol-cytochrome c reductase complex (complex III or cytochrome b-c1 complex) that is part of the mitochondrial respiratory chain. The b-c1 complex mediates electron transfer from ubiquinol to cytochrome c. Contributes to the generation of a proton gradient across the mitochondrial membrane that is then used for ATP synthesis. The chain is Cytochrome b (mt-cyb) from Sphyrna tiburo tiburo (Hammerhead shark).